Consider the following 277-residue polypeptide: MFPFYSCWRTGLLLLLLAVAVRESWQTEEKTCDLVGEKGKESEKELALVKRLKPLFNKSFESTVGQGSDTYIYIFRVCREAGNHTSGAGLVQINKSNGKETVVGRLNETHIFNGSNWIMLIYKGGDEYDNHCGKEQRRAVVMISCNRHTLADNFNPVSEERGKVQDCFYLFEMDSSLACSPEISHLSVGSILLVTFASLVAVYVVGGFLYQRLVVGAKGMEQFPHLAFWQDLGNLVADGCDFVCRSKPRNVPAAYRGVGDDQLGEESEERDDHLLPM.

The first 26 residues, 1 to 26 (MFPFYSCWRTGLLLLLLAVAVRESWQ), serve as a signal peptide directing secretion. Over 27 to 185 (TEEKTCDLVG…SLACSPEISH (159 aa)) the chain is Lumenal. The MRH domain maps to 30–181 (KTCDLVGEKG…EMDSSLACSP (152 aa)). C32 and C78 are oxidised to a cystine. N57, N83, N94, N107, and N113 each carry an N-linked (GlcNAc...) asparagine glycan. 2 disulfide bridges follow: C132–C167 and C145–C179. The chain crosses the membrane as a helical span at residues 186–210 (LSVGSILLVTFASLVAVYVVGGFLY). Residues 211–277 (QRLVVGAKGM…EERDDHLLPM (67 aa)) lie on the Cytoplasmic side of the membrane. Positions 256 to 277 (RGVGDDQLGEESEERDDHLLPM) are disordered. S267 carries the phosphoserine modification.

In terms of assembly, homodimer. Binds GGA1, GGA2 and GGA3.

It is found in the lysosome membrane. Transport of phosphorylated lysosomal enzymes from the Golgi complex and the cell surface to lysosomes. Lysosomal enzymes bearing phosphomannosyl residues bind specifically to mannose-6-phosphate receptors in the Golgi apparatus and the resulting receptor-ligand complex is transported to an acidic prelyosomal compartment where the low pH mediates the dissociation of the complex. The chain is Cation-dependent mannose-6-phosphate receptor (M6PR) from Homo sapiens (Human).